A 191-amino-acid chain; its full sequence is Protein YceI (191 aa).

Residues 1 to 22 form the signal peptide; the sequence is MKKNLLGFTFASLLFTTGSAVA.

It belongs to the UPF0312 family. Type 1 subfamily.

It localises to the periplasm. The chain is Protein YceI from Salmonella agona (strain SL483).